Consider the following 563-residue polypeptide: Beta-catenin-like protein 1 (563 aa).

Met-1 bears the N-acetylmethionine mark. The interval 1–49 is disordered; that stretch reads MDVGELLSYQPNRGTKRPRDDEEEEQKMRRKQTGTRERGRYREEEMTVV. The Nuclear localization signal motif lies at 16–33; that stretch reads KRPRDDEEEEQKMRRKQT. Basic and acidic residues predominate over residues 34–45; sequence GTRERGRYREEE. 2 HEAT repeats span residues 79 to 129 and 134 to 176; these read ESSV…VVAT and YHLL…TLHE. An N6-acetyllysine modification is found at Lys-91. A Nuclear export signal (NES) motif is present at residues 130 to 140; sequence MPDLYHLLVEL. ARM repeat units follow at residues 178–228, 229–273, 274–323, 325–363, and 364–417; these read EEGA…MAEF, RPEM…LQDN, DENR…CLML, SNRERFLKGEGLQLMNLMLREKKISRSSALKVLDHAMIG, and PEGT…LLRN. Residue Ser-389 is modified to Phosphoserine. A coiled-coil region spans residues 476-540; that stretch reads DTEEEFYLRR…HIIKEYAENI (65 aa). The residue at position 545 (Ser-545) is a Phosphoserine.

Component of the PRP19-CDC5L splicing complex composed of a core complex comprising a homotetramer of PRPF19, CDC5L, PLRG1 and BCAS2, and at least three less stably associated proteins CTNNBL1, CWC15 and HSPA8. Interacts directly with CWC15 and CDC5L in the complex. Interacts with AICDA; the interaction is important for the antibody diversification activity of AICDA. Interacts with PRPF31 (via its NLS). Interacts (via its N-terminal NLS) with KPNA1 and KPNA2. In terms of tissue distribution, widely expressed with highest levels in skeletal muscle, placenta, heart, spleen, testis and thyroid.

It is found in the nucleus. Its subcellular location is the cytoplasm. Component of the PRP19-CDC5L complex that forms an integral part of the spliceosome and is required for activating pre-mRNA splicing. Participates in AID/AICDA-mediated somatic hypermutation (SHM) and class-switch recombination (CSR), 2 processes resulting in the production of high-affinity, mutated isotype-switched antibodies. The chain is Beta-catenin-like protein 1 (CTNNBL1) from Homo sapiens (Human).